A 201-amino-acid polypeptide reads, in one-letter code: dTTP/UTP pyrophosphatase (201 aa).

Asp-81 acts as the Proton acceptor in catalysis.

This sequence belongs to the Maf family. YhdE subfamily. Requires a divalent metal cation as cofactor.

Its subcellular location is the cytoplasm. The catalysed reaction is dTTP + H2O = dTMP + diphosphate + H(+). The enzyme catalyses UTP + H2O = UMP + diphosphate + H(+). In terms of biological role, nucleoside triphosphate pyrophosphatase that hydrolyzes dTTP and UTP. May have a dual role in cell division arrest and in preventing the incorporation of modified nucleotides into cellular nucleic acids. In Dechloromonas aromatica (strain RCB), this protein is dTTP/UTP pyrophosphatase.